A 1009-amino-acid chain; its full sequence is DENN domain-containing protein 1A (1009 aa).

The region spanning 13-145 is the uDENN domain; that stretch reads FEVYVEVAYP…HKLPIPDPGV (133 aa). Residues 162–298 form the cDENN domain; it reads ELPSIPENRN…VISSLKNRLK (137 aa). Residues 300 to 378 enclose the dDENN domain; sequence VSTTTGDGVA…DGRLDLLNSG (79 aa). Positions 381 to 385 match the FXDXF motif motif; the sequence is FSDVF. Positions 453–564 are disordered; it reads DIAENGCAPT…TGPVPAPPDR (112 aa). Phosphoserine is present on S473. Basic and acidic residues predominate over residues 477 to 489; that stretch reads EAKDPKLREDRRP. The segment covering 500–509 has biased composition (basic residues); that stretch reads PRPHVVKRPK. T519 bears the Phosphothreonine mark. Residues S520, S523, S536, S538, and S546 each carry the phosphoserine modification. The Clathrin box motif lies at 569 to 578; that stretch reads DLLEDVFSNL. Position 592 is a phosphoserine (S592). The segment at 648-714 is disordered; sequence IPSKPPAASP…RKTPELGIVP (67 aa). At S749 the chain carries Phosphoserine. Disordered regions lie at residues 796–831 and 928–1009; these read STLPSRPATPNVATPFTPQFSFPPAGTPTPFPQPPL and RSSA…ETFE. 2 stretches are compositionally biased toward pro residues: residues 820–831 and 945–957; these read AGTPTPFPQPPL and GDPPLLPPRPPQG. Residues 972-983 show a composition bias toward basic and acidic residues; the sequence is DPFEDLLQKTKQ. A compositionally biased stretch (low complexity) spans 986 to 997; that stretch reads SPSPALAPAPDS. Residues 999-1009 are compositionally biased toward basic and acidic residues; the sequence is EQLRKQWETFE.

As to quaternary structure, interacts with RAB35. Interacts with clathrin and with the adapter protein complex 2, AP-2. Interacts with ITSN1 and SH3GL2. Interacts (when phosphorylated) with YWHAE. In terms of processing, phosphorylated on serine and/or threonine in an Akt-dependent manner. Phosphorylation probably regulates the guanine nucleotide exchange factor (GEF) activity, possibly by disrupting an intramolecular interaction between the DENN domain and the C-terminus of the protein, thereby relieving the autoinhibition.

Its subcellular location is the cytoplasmic vesicle. The protein localises to the clathrin-coated vesicle membrane. It is found in the presynaptic cell membrane. Its activity is regulated as follows. The guanine nucleotide exchange factor (GEF) activity is autoinhibited. Autoinhibition may be the result of intramolecular interaction between the DENN domain and the C-terminus, which is disrupted upon phosphorylation. Activation is regulated by Akt activation. Its function is as follows. Guanine nucleotide exchange factor (GEF) regulating clathrin-mediated endocytosis through RAB35 activation. Promotes the exchange of GDP to GTP, converting inactive GDP-bound RAB35 into its active GTP-bound form. Regulates clathrin-mediated endocytosis of synaptic vesicles and mediates exit from early endosomes. Binds phosphatidylinositol-phosphates (PtdInsPs), with some preference for PtdIns(3)P. The sequence is that of DENN domain-containing protein 1A from Homo sapiens (Human).